A 156-amino-acid chain; its full sequence is Small ribosomal subunit protein uS7 (156 aa).

It belongs to the universal ribosomal protein uS7 family. Part of the 30S ribosomal subunit. Contacts proteins S9 and S11.

In terms of biological role, one of the primary rRNA binding proteins, it binds directly to 16S rRNA where it nucleates assembly of the head domain of the 30S subunit. Is located at the subunit interface close to the decoding center, probably blocks exit of the E-site tRNA. In Staphylococcus aureus (strain bovine RF122 / ET3-1), this protein is Small ribosomal subunit protein uS7.